Consider the following 248-residue polypeptide: Probable transcriptional regulator LumQ (248 aa).

An HTH araC/xylS-type domain is found at 148 to 246 (VLIDNYIEQH…GMSPTRYQFF (99 aa)). 2 consecutive DNA-binding regions (H-T-H motif) follow at residues 165–186 (AELSSVAFLAQSQFYALFKSQM) and 213–236 (LSQVAQLCGFSSQSSFSQAFRRLY).

In terms of biological role, probable transcriptional regulator. Its target gene(s) is not yet known. The chain is Probable transcriptional regulator LumQ (lumQ) from Photobacterium leiognathi.